Here is a 296-residue protein sequence, read N- to C-terminus: Phosphoribosylaminoimidazole-succinocarboxamide synthase (296 aa).

Belongs to the SAICAR synthetase family.

The catalysed reaction is 5-amino-1-(5-phospho-D-ribosyl)imidazole-4-carboxylate + L-aspartate + ATP = (2S)-2-[5-amino-1-(5-phospho-beta-D-ribosyl)imidazole-4-carboxamido]succinate + ADP + phosphate + 2 H(+). It participates in purine metabolism; IMP biosynthesis via de novo pathway; 5-amino-1-(5-phospho-D-ribosyl)imidazole-4-carboxamide from 5-amino-1-(5-phospho-D-ribosyl)imidazole-4-carboxylate: step 1/2. This Trichlorobacter lovleyi (strain ATCC BAA-1151 / DSM 17278 / SZ) (Geobacter lovleyi) protein is Phosphoribosylaminoimidazole-succinocarboxamide synthase.